A 487-amino-acid polypeptide reads, in one-letter code: Glutamyl-tRNA(Gln) amidotransferase subunit A (487 aa).

Residues Lys74 and Ser149 each act as charge relay system in the active site. The active-site Acyl-ester intermediate is the Ser173.

It belongs to the amidase family. GatA subfamily. As to quaternary structure, heterotrimer of A, B and C subunits.

It carries out the reaction L-glutamyl-tRNA(Gln) + L-glutamine + ATP + H2O = L-glutaminyl-tRNA(Gln) + L-glutamate + ADP + phosphate + H(+). Functionally, allows the formation of correctly charged Gln-tRNA(Gln) through the transamidation of misacylated Glu-tRNA(Gln) in organisms which lack glutaminyl-tRNA synthetase. The reaction takes place in the presence of glutamine and ATP through an activated gamma-phospho-Glu-tRNA(Gln). The sequence is that of Glutamyl-tRNA(Gln) amidotransferase subunit A from Prochlorococcus marinus (strain MIT 9211).